The chain runs to 286 residues: Bifunctional protein FolD (286 aa).

Residues 170-172 and I236 contribute to the NADP(+) site; that span reads GHS.

It belongs to the tetrahydrofolate dehydrogenase/cyclohydrolase family. As to quaternary structure, homodimer.

The catalysed reaction is (6R)-5,10-methylene-5,6,7,8-tetrahydrofolate + NADP(+) = (6R)-5,10-methenyltetrahydrofolate + NADPH. The enzyme catalyses (6R)-5,10-methenyltetrahydrofolate + H2O = (6R)-10-formyltetrahydrofolate + H(+). It functions in the pathway one-carbon metabolism; tetrahydrofolate interconversion. In terms of biological role, catalyzes the oxidation of 5,10-methylenetetrahydrofolate to 5,10-methenyltetrahydrofolate and then the hydrolysis of 5,10-methenyltetrahydrofolate to 10-formyltetrahydrofolate. The polypeptide is Bifunctional protein FolD (Methanococcoides burtonii (strain DSM 6242 / NBRC 107633 / OCM 468 / ACE-M)).